The chain runs to 312 residues: Malate dehydrogenase (312 aa).

Residues 7–13 (GAAGGIG) and Asp-34 contribute to the NAD(+) site. Substrate-binding residues include Arg-81 and Arg-87. NAD(+) is bound by residues Asn-94 and 117–119 (ITN). Substrate is bound by residues Asn-119 and Arg-153. The active-site Proton acceptor is the His-177. Residue Met-227 coordinates NAD(+).

The protein belongs to the LDH/MDH superfamily. MDH type 1 family. In terms of assembly, homodimer.

It carries out the reaction (S)-malate + NAD(+) = oxaloacetate + NADH + H(+). Its function is as follows. Catalyzes the reversible oxidation of malate to oxaloacetate. This chain is Malate dehydrogenase, found in Shigella flexneri serotype 5b (strain 8401).